Reading from the N-terminus, the 258-residue chain is Pimeloyl-[acyl-carrier protein] methyl ester esterase (258 aa).

Substrate is bound by residues Trp22, 84–85 (SL), and 145–149 (FLAIQ). Ser84 (nucleophile) is an active-site residue. Catalysis depends on residues Asp209 and His238. Position 238 (His238) interacts with substrate.

The protein belongs to the AB hydrolase superfamily. Carboxylesterase BioH family. As to quaternary structure, monomer.

The protein localises to the cytoplasm. It carries out the reaction 6-carboxyhexanoyl-[ACP] methyl ester + H2O = 6-carboxyhexanoyl-[ACP] + methanol + H(+). It participates in cofactor biosynthesis; biotin biosynthesis. The physiological role of BioH is to remove the methyl group introduced by BioC when the pimeloyl moiety is complete. It allows to synthesize pimeloyl-ACP via the fatty acid synthetic pathway through the hydrolysis of the ester bonds of pimeloyl-ACP esters. In Pseudoalteromonas atlantica (strain T6c / ATCC BAA-1087), this protein is Pimeloyl-[acyl-carrier protein] methyl ester esterase.